The primary structure comprises 258 residues: Apolipoprotein A-I (258 aa).

The first 18 residues, 1-18 (MKFLVLALTILLAAGTQA), serve as a signal peptide directing secretion. Residues 32–63 (VKAALNMYIAQVKLTAQRSIDLLDDTEYKEYK) are 3 X approximate tandem repeats. 2 repeat units span residues 64–85 (MQLSQSLDNLQQFADSTSKSWP) and 86–106 (PTPRSSAPSCDATATVRAEVM). The 10 X approximate tandem repeats stretch occupies residues 64–258 (MQLSQSLDNL…WLSTRPSARP (195 aa)). The stretch at 107-117 (KDVEDVRTQLE) is one 3; half-length repeat. A run of 7 repeats spans residues 118 to 139 (PKRAELTEVLNKHIDEYRKKLE), 140 to 161 (PLIKQHIELRRTEMDAFRAKID), 162 to 183 (PVVEEMRAKVAVNVEETKTKLM), 184 to 205 (PIVEIVRAKLTERLEELRTLAA), 206 to 227 (PYAEEYKEQMFKAVGEVREKVA), 228 to 238 (PLSEDFKARWA), and 239 to 258 (PPPRRPSKSSWLSTRPSARP). The disordered stretch occupies residues 233–258 (FKARWAPPPRRPSKSSWLSTRPSARP). Positions 246–258 (KSSWLSTRPSARP) are enriched in polar residues.

This sequence belongs to the apolipoprotein A1/A4/E family. As to expression, major protein of plasma HDL, also found in chylomicrons. Expressed in liver, intestine and muscle.

Its subcellular location is the secreted. Functionally, participates in the reverse transport of cholesterol from tissues to the liver for excretion by promoting cholesterol efflux from tissues and by acting as a cofactor for the lecithin cholesterol acyltransferase (LCAT). The sequence is that of Apolipoprotein A-I (apoa1) from Salmo salar (Atlantic salmon).